The primary structure comprises 417 residues: MITLTIFSPTDFQGLRGPLIIYDPEDPQKHLYDVDDESTIFQVGDSWHNSTVPLLAGYVATGIVPVSDSGTVDGAGRFQGGPAVPFAVTNVVKGQRYRLRIINQSARNVFTISIDKHFLTIIEADGVATQPLLVNEIEMLAGQRYSAIVSTPPQLSGSLALELINMAHSFTQTRPLINNAPFVSGDPSRNLNQNATLSRGILRYAGGRREDPRTPMTLGPDPTNPLAFVEANLKPLVNNPPGIPDVNITLNLVVTTGAAQWNVNNVSYLPPVVPTLVKILAGADEPANFNVTENTFLLPVNATIQITFPPMLMTKLTPSTYTEYVTIFLILLHPIDAFPKNNFWVVKSNSSDSDVINTIDPIKRDVTAVGAEGTIVRFTTDNIVMASGTDEVRTDVEPDAAWEGLCPAYDALPSALQ.

It belongs to the multicopper oxidase family.

In terms of biological role, laccase-like protein; part of the gene cluster that mediates the biosynthesis of clavilactone A, a meroterpenoid that features a unique benzo-fused ten-membered carbocyclic ring unit with an alpha,beta-epoxy-gamma-lactone moiety, forming an intriguing 10/5/3 tricyclic nested skeleton. ClaR, ClaS and ClaT are sufficient to produce clavilactone A and the function of claX, if any, has still to be identified. The biosynthesis begins with the prenyltransferase claS that transfers geranyl pyrophosphate (GPP) to hydroquinone to produces geranylhydroquinon. The cytochrome P450 monooxygenase claR then catalyzes the diradical coupling reaction between the intramolecular hydroquinone and allyl moieties to form the benzo-fused ten-membered carbocyclic ring unit of wigantol. Finally the cytochrome P450 monooxygenase claT exquisitely and stereoselectively assembles the alpha,beta-epoxy-gamma-lactone moiety, producing clavilactone A via arnebinol A. The chain is Laccase-like protein claX from Ampulloclitocybe clavipes (Club foot).